The following is a 65-amino-acid chain: Metallothionein (65 aa).

It belongs to the metallothionein superfamily. Type 4 family.

Functionally, metallothioneins have a high content of cysteine residues that bind various heavy metals. This is Metallothionein from Paracentrotus lividus (Common sea urchin).